Here is a 113-residue protein sequence, read N- to C-terminus: Hydrogenase maturation factor HypA (113 aa).

Position 2 (H2) interacts with Ni(2+). Positions 73, 76, 89, and 92 each coordinate Zn(2+).

This sequence belongs to the HypA/HybF family.

Functionally, involved in the maturation of [NiFe] hydrogenases. Required for nickel insertion into the metal center of the hydrogenase. The sequence is that of Hydrogenase maturation factor HypA from Cereibacter sphaeroides (strain ATCC 17023 / DSM 158 / JCM 6121 / CCUG 31486 / LMG 2827 / NBRC 12203 / NCIMB 8253 / ATH 2.4.1.) (Rhodobacter sphaeroides).